The sequence spans 176 residues: Membrane glycoprotein UL144 (176 aa).

Positions 1–20 are cleaved as a signal peptide; sequence MKPLIMLICFAVILLQLGVT. TNFR-Cys repeat units lie at residues 22–56 and 58–95; these read VCQH…SVTC and PCPN…NTVC. Cystine bridges form between C23/C34, C35/C48, C38/C56, C59/C71, C74/C87, and C77/C95. The chain crosses the membrane as a helical span at residues 134–154; it reads LAWLSLFIFLVGIILLILYLI.

As to quaternary structure, interacts with host TRIM23; this interaction causes auto-ubiquitination of TRAF6, leading to NF-kappaB activation.

The protein localises to the membrane. Activates NF-kappaB in a tumor necrosis factor receptor (TNFR)-associated factor 6 (TRAF6)-dependent manner, causing the up-regulation of the chemokine CCL22. The sequence is that of Membrane glycoprotein UL144 (UL144) from Homo sapiens (Human).